Here is a 275-residue protein sequence, read N- to C-terminus: Large ribosomal subunit protein uL2 (275 aa).

Positions Arg-221 to Ala-275 are disordered. Over residues Pro-227–Ala-239 the composition is skewed to basic and acidic residues. Residues Leu-254–Lys-263 show a composition bias toward basic residues. Positions Ser-264–Ala-275 are enriched in basic and acidic residues.

The protein belongs to the universal ribosomal protein uL2 family. Part of the 50S ribosomal subunit. Forms a bridge to the 30S subunit in the 70S ribosome.

Functionally, one of the primary rRNA binding proteins. Required for association of the 30S and 50S subunits to form the 70S ribosome, for tRNA binding and peptide bond formation. It has been suggested to have peptidyltransferase activity; this is somewhat controversial. Makes several contacts with the 16S rRNA in the 70S ribosome. The chain is Large ribosomal subunit protein uL2 from Thermomicrobium roseum (strain ATCC 27502 / DSM 5159 / P-2).